A 265-amino-acid chain; its full sequence is Aquaporin-5 (265 aa).

Topologically, residues 1–12 (MKKEVCSLAFLK) are cytoplasmic. Residues 13–33 (AVFAEFLATLIFVFFGLASAL) traverse the membrane as a helical segment. Residues 34–39 (KWPSAL) are Extracellular-facing. Residues 40-60 (PTILQIALAFGLAIGTLAQAL) traverse the membrane as a helical segment. At 61 to 65 (GPVSG) the chain is on the cytoplasmic side. Residues 66–74 (GHINPAITL) constitute an intramembrane region (discontinuously helical). The short motif at 69–71 (NPA) is the NPA 1 element. Residues 75 to 87 (ALLVGNQISLLRA) lie on the Cytoplasmic side of the membrane. A helical membrane pass occupies residues 88–108 (VFYVVAQLVGAIAGAGILYGL). Residues 109–126 (APGNARGNLAVNSLNNNT) are Extracellular-facing. N-linked (GlcNAc...) asparagine glycosylation occurs at asparagine 124. The helical transmembrane segment at 127 to 147 (TPGQAVVVEMILTFQLALCIF) threads the bilayer. Residues 148 to 158 (SSTDSRRTSPV) are Cytoplasmic-facing. The helical transmembrane segment at 159–179 (GSPALSIGLSVTLGHLVGIYF) threads the bilayer. Threonine 180 is a topological domain (extracellular). Positions 181–191 (GCSMNPARSFG) form an intramembrane region, discontinuously helical. An NPA 2 motif is present at residues 185–187 (NPA). Residues 192-203 (PAVVMNRFSPSH) are Extracellular-facing. The helical transmembrane segment at 204–224 (WVFWVGPIVGAAVAAILYFYL) threads the bilayer. Over 225–265 (LFPNSLSLSERVAVVKGTYESEEDWEEQREERKKTMELTAH) the chain is Cytoplasmic.

The protein belongs to the MIP/aquaporin (TC 1.A.8) family. Homotetramer; each monomer provides an independent water pore. Interacts with TRPV4; the interaction is probably indirect and regulates TRPV4 activation by hypotonicity.

It is found in the apical cell membrane. Its subcellular location is the cell membrane. The protein localises to the cytoplasmic vesicle membrane. The catalysed reaction is H2O(in) = H2O(out). Aquaporins form homotetrameric transmembrane channels, with each monomer independently mediating water transport across the plasma membrane along its osmotic gradient. Plays an important role in fluid secretion in salivary glands. Required for TRPV4 activation by hypotonicity. Together with TRPV4, controls regulatory volume decrease in salivary epithelial cells. Seems to play a redundant role in water transport in the eye, lung and in sweat glands. The chain is Aquaporin-5 from Sus scrofa (Pig).